Here is a 154-residue protein sequence, read N- to C-terminus: Minor structural pilin EpdC (154 aa).

The propeptide occupies 1–13 (MIKMLQLPFNKKG). Positions 14 to 24 (QVSFDFIIAML) match the QXSXEXXXL motif.

In terms of processing, the N-terminus is cleaved by the prepilin peptidase EppA, which recognizes the class III signal sequence.

The protein resides in the secreted. It localises to the cell surface. Its subcellular location is the fimbrium. Functionally, minor component of the type IV-like pili. Essential for pili formation. The sequence is that of Minor structural pilin EpdC from Methanococcus maripaludis (strain DSM 14266 / JCM 13030 / NBRC 101832 / S2 / LL).